The primary structure comprises 498 residues: Lycopene beta cyclase, chloroplastic/chromoplastic (498 aa).

Residues 1–79 constitute a chloroplast and chromoplast transit peptide; it reads MDTLLRTPNN…ELPMYDPSKG (79 aa). An NAD(+)-binding site is contributed by 84-112; the sequence is LAVVGGGPAGLAVAQQVSEAGLSVCSIDP. Residues 293-297 carry the FLEET motif motif; sequence FLEET.

It belongs to the lycopene cyclase family. Monomer. The cofactor is FAD. Requires NADPH as cofactor.

It localises to the plastid. The protein localises to the chloroplast. The protein resides in the chromoplast. The catalysed reaction is a carotenoid psi-end group = a carotenoid beta-end derivative. The enzyme catalyses all-trans-lycopene = gamma-carotene. It catalyses the reaction gamma-carotene = all-trans-beta-carotene. It carries out the reaction all-trans-neurosporene = beta-zeacarotene. The catalysed reaction is beta-zeacarotene = 7,8-dihydro-beta-carotene. It functions in the pathway carotenoid biosynthesis; beta-carotene biosynthesis. The protein operates within carotenoid biosynthesis; beta-zeacarotene biosynthesis. Functionally, catalyzes the double cyclization reaction which converts lycopene to beta-carotene. Catalyzes the double cyclization reaction which converts neurosporene to 7,8-dihydro-beta-carotene. In Capsicum annuum (Capsicum pepper), this protein is Lycopene beta cyclase, chloroplastic/chromoplastic.